The primary structure comprises 606 residues: UPF0329 protein ECU06_0090 (606 aa).

The segment at Lys317 to Asn401 is disordered. Positions Glu328–Gly353 are enriched in basic and acidic residues. Positions Ala354 to Ser367 are enriched in basic residues. The segment covering Ser381–Asn401 has biased composition (basic and acidic residues).

Belongs to the UPF0329 family.

The polypeptide is UPF0329 protein ECU06_0090 (Encephalitozoon cuniculi (strain GB-M1) (Microsporidian parasite)).